The primary structure comprises 417 residues: Tyrosine--tRNA ligase (417 aa).

Residue Tyr34 coordinates L-tyrosine. Residues 39 to 48 carry the 'HIGH' region motif; the sequence is PSGDSLHIGH. Tyr165 and Gln169 together coordinate L-tyrosine. The 'KMSKS' region motif lies at 227-231; the sequence is KFGKT. ATP is bound at residue Lys230. The region spanning 349–415 is the S4 RNA-binding domain; sequence ANIVDWLVDT…GKKNYTLAKV (67 aa).

This sequence belongs to the class-I aminoacyl-tRNA synthetase family. TyrS type 1 subfamily. As to quaternary structure, homodimer.

The protein resides in the cytoplasm. It carries out the reaction tRNA(Tyr) + L-tyrosine + ATP = L-tyrosyl-tRNA(Tyr) + AMP + diphosphate + H(+). In terms of biological role, catalyzes the attachment of tyrosine to tRNA(Tyr) in a two-step reaction: tyrosine is first activated by ATP to form Tyr-AMP and then transferred to the acceptor end of tRNA(Tyr). The protein is Tyrosine--tRNA ligase of Limosilactobacillus fermentum (strain NBRC 3956 / LMG 18251) (Lactobacillus fermentum).